A 206-amino-acid polypeptide reads, in one-letter code: Inactive ribonuclease-like protein 9 (206 aa).

The first 26 residues, 1-26, serve as a signal peptide directing secretion; it reads MMRTLITTHSLLLFLLLLQLLQPLQF. 3 disulfides stabilise this stretch: Cys99–Cys154, Cys117–Cys169, and Cys124–Cys131. N-linked (GlcNAc...) asparagine glycosylation is present at Asn132.

Belongs to the pancreatic ribonuclease family.

It localises to the secreted. In terms of biological role, does not exhibit any ribonuclease activity. This is Inactive ribonuclease-like protein 9 (RNASE9) from Saimiri boliviensis boliviensis (Bolivian squirrel monkey).